We begin with the raw amino-acid sequence, 249 residues long: Zinc finger protein CG30 (249 aa).

The segment at 8–66 adopts an RING-type zinc-finger fold; the sequence is CHICCSVGEIKNYFLQPVDAITILPIVELHTCRHQLCVMCVRKIAQRGRDKRVECPMCR.

The protein is Zinc finger protein CG30 (CG30) of Orgyia pseudotsugata (Douglas-fir tussock moth).